Consider the following 142-residue polypeptide: Small heat shock protein IbpB (142 aa).

Positions 26 to 137 (SGESQSFPPY…PPQRIAINER (112 aa)) constitute a sHSP domain.

It belongs to the small heat shock protein (HSP20) family. Homodimer. Forms homomultimers of about 100-150 subunits at optimal growth temperatures. Conformation changes to oligomers at high temperatures or high ionic concentrations. The decrease in size of the multimers is accompanied by an increase in chaperone activity.

It localises to the cytoplasm. In terms of biological role, associates with aggregated proteins, together with IbpA, to stabilize and protect them from irreversible denaturation and extensive proteolysis during heat shock and oxidative stress. Aggregated proteins bound to the IbpAB complex are more efficiently refolded and reactivated by the ATP-dependent chaperone systems ClpB and DnaK/DnaJ/GrpE. Its activity is ATP-independent. In Salmonella typhi, this protein is Small heat shock protein IbpB.